We begin with the raw amino-acid sequence, 166 residues long: Interferon gamma (166 aa).

The signal sequence occupies residues 1-23 (MKYTSYILALQLCVLLGFSGSYG). Gln24 is subject to Pyrrolidone carboxylic acid. Residues Asn39 and Asn106 are each glycosylated (N-linked (GlcNAc...) asparagine).

It belongs to the type II (or gamma) interferon family. Homodimer. Interacts with IFNGR1 (via extracellular domain); this interaction promotes IFNGR1 dimerization. Released primarily from activated T lymphocytes.

The protein resides in the secreted. Its function is as follows. Type II interferon produced by immune cells such as T-cells and NK cells that plays crucial roles in antimicrobial, antiviral, and antitumor responses by activating effector immune cells and enhancing antigen presentation. Primarily signals through the JAK-STAT pathway after interaction with its receptor IFNGR1 to affect gene regulation. Upon IFNG binding, IFNGR1 intracellular domain opens out to allow association of downstream signaling components JAK2, JAK1 and STAT1, leading to STAT1 activation, nuclear translocation and transcription of IFNG-regulated genes. Many of the induced genes are transcription factors such as IRF1 that are able to further drive regulation of a next wave of transcription. Plays a role in class I antigen presentation pathway by inducing a replacement of catalytic proteasome subunits with immunoproteasome subunits. In turn, increases the quantity, quality, and repertoire of peptides for class I MHC loading. Increases the efficiency of peptide generation also by inducing the expression of activator PA28 that associates with the proteasome and alters its proteolytic cleavage preference. Up-regulates as well MHC II complexes on the cell surface by promoting expression of several key molecules such as cathepsins B/CTSB, H/CTSH, and L/CTSL. Participates in the regulation of hematopoietic stem cells during development and under homeostatic conditions by affecting their development, quiescence, and differentiation. The polypeptide is Interferon gamma (IFNG) (Cervus elaphus (Red deer)).